Reading from the N-terminus, the 166-residue chain is Small ribosomal subunit protein uS5 (166 aa).

The 64-residue stretch at 11 to 74 (LEDRVVSINR…EDAKKNLINV (64 aa)) folds into the S5 DRBM domain.

The protein belongs to the universal ribosomal protein uS5 family. Part of the 30S ribosomal subunit. Contacts proteins S4 and S8.

Its function is as follows. With S4 and S12 plays an important role in translational accuracy. Functionally, located at the back of the 30S subunit body where it stabilizes the conformation of the head with respect to the body. In Latilactobacillus sakei subsp. sakei (strain 23K) (Lactobacillus sakei subsp. sakei), this protein is Small ribosomal subunit protein uS5.